The following is a 736-amino-acid chain: Dimethylamine dehydrogenase (736 aa).

S-6-FMN cysteine is present on Cys31. Position 176–179 (176–179) interacts with substrate; that stretch reads YGAH. Tyr181 functions as the Proton donor in the catalytic mechanism. 2 residues coordinate FMN: Arg229 and Arg329. Positions 352, 355, 358, and 371 each coordinate [4Fe-4S] cluster. 398–427 lines the ADP pocket; that stretch reads DVLIVGAGPAGSECARVLMERGYTVHLVDT.

This sequence in the N-terminal section; belongs to the NADH:flavin oxidoreductase/NADH oxidase family. FMN serves as cofactor. [4Fe-4S] cluster is required as a cofactor.

It catalyses the reaction dimethylamine + oxidized [electron-transfer flavoprotein] + H2O + H(+) = methylamine + reduced [electron-transfer flavoprotein] + formaldehyde. The sequence is that of Dimethylamine dehydrogenase (dmd) from Hyphomicrobium sp. (strain x).